Consider the following 510-residue polypeptide: Pre-glycoprotein polyprotein GP complex (510 aa).

The N-myristoyl glycine; by host moiety is linked to residue Gly2. The Extracellular segment spans residues 2-17 (GQFITLMQSIPEALNM). The helical transmembrane segment at 18-32 (AFNVALVIVSLLCVT) threads the bilayer. A topological domain (cytoplasmic) is located at residue Lys33. A helical transmembrane segment spans residues 34-53 (GLINLWKCGIIQLLMFLALA). Extracellular-facing segments span residues 54-58 (GRSCD) and 59-448 (GEYK…ALAD). Zn(2+) is bound at residue Cys57. Asn75, Asn90, Asn101, Asn112, Asn117, Asn122, Asn133, Asn182, Asn218, and Asn243 each carry an N-linked (GlcNAc...) asparagine; by host glycan. Intrachain disulfides connect Cys87–Cys250, Cys295–Cys308, Cys317–Cys326, and Cys380–Cys401. N-linked (GlcNAc...) asparagine; by host glycosylation is found at Asn381, Asn389, Asn406, and Asn411. A helical membrane pass occupies residues 449–469 (LCFWSLVFFTTTVFFQLIGIP). The Cytoplasmic portion of the chain corresponds to 470 to 510 (THRHLIGEGCPKPHRLTSNSLCSCGFYKIPKKPFRWVRKGK). Residues His471, His473, Cys479, His483, Cys491, and Cys493 each coordinate Zn(2+).

The protein belongs to the arenaviridae GPC protein family. As to quaternary structure, homotetramer; disulfide-linked. In terms of assembly, homotetramer. GP2 homotetramers bind through ionic interactions with GP1 homotetramers to form the GP complex together with the stable signal peptide. The GP-C polyprotein interacts with the host protease MBTPS1/SKI-1 resulting in the polyprotein processing. Post-translationally, specific enzymatic cleavages in vivo yield mature proteins. GP-C polyprotein is cleaved in the endoplasmic reticulum by the host protease MBTPS1. Only cleaved glycoprotein is incorporated into virions. In terms of processing, the SSP remains stably associated with the GP complex following cleavage by signal peptidase and plays crucial roles in the trafficking of GP through the secretory pathway. Myristoylation is necessary for GP2-mediated fusion activity.

It is found in the virion membrane. Its subcellular location is the host endoplasmic reticulum membrane. The protein resides in the host Golgi apparatus membrane. It localises to the host cell membrane. Functionally, class I viral fusion protein that directs fusion of viral and host endosomal membranes, leading to delivery of the nucleocapsid into the cytoplasm. Membrane fusion is mediated by irreversible conformational changes induced upon acidification in the endosome. Its function is as follows. Stable signal peptide (SSP): cleaved and functions as a signal peptide. In addition, it is also retained as the third component of the GP complex. The SSP is required for efficient glycoprotein expression, post-translational maturation cleavage of GP1 and GP2, glycoprotein transport to the cell surface plasma membrane, formation of infectious virus particles, and acid pH-dependent glycoprotein-mediated cell fusion. Interacts with the host receptor. The sequence is that of Pre-glycoprotein polyprotein GP complex from Pirital mammarenavirus (isolate Rat/Venezuela/VAV-488/1995) (PIRV).